A 238-amino-acid polypeptide reads, in one-letter code: ATP-dependent dethiobiotin synthetase BioD (238 aa).

12–17 (EVGKTV) serves as a coordination point for ATP. Thr16 contributes to the Mg(2+) binding site. Lys37 is an active-site residue. Position 41 (Thr41) interacts with substrate. Residues Asp50, 109–112 (EGAG), 170–171 (GS), and 200–202 (PAG) each bind ATP. Mg(2+) is bound by residues Asp50 and Glu109.

It belongs to the dethiobiotin synthetase family. In terms of assembly, homodimer. Mg(2+) is required as a cofactor.

The protein localises to the cytoplasm. It carries out the reaction (7R,8S)-7,8-diammoniononanoate + CO2 + ATP = (4R,5S)-dethiobiotin + ADP + phosphate + 3 H(+). The protein operates within cofactor biosynthesis; biotin biosynthesis; biotin from 7,8-diaminononanoate: step 1/2. Functionally, catalyzes a mechanistically unusual reaction, the ATP-dependent insertion of CO2 between the N7 and N8 nitrogen atoms of 7,8-diaminopelargonic acid (DAPA, also called 7,8-diammoniononanoate) to form a ureido ring. The sequence is that of ATP-dependent dethiobiotin synthetase BioD from Streptomyces avermitilis (strain ATCC 31267 / DSM 46492 / JCM 5070 / NBRC 14893 / NCIMB 12804 / NRRL 8165 / MA-4680).